The following is a 468-amino-acid chain: Protein translocase subunit SecY (468 aa).

The Cytoplasmic segment spans residues Met-1–Pro-20. A helical transmembrane segment spans residues Lys-21 to Pro-47. At Val-48–Tyr-58 the chain is on the extracellular side. The segment at residues Phe-59–Leu-66 is an intramembrane region (helical). A discontinuously helical membrane pass occupies residues Phe-59 to Ile-87. An intramembrane segment occupies Ala-67–Ile-78. The helical intramembrane region spans Gly-79–Ile-87. Topologically, residues Leu-88 to Arg-108 are cytoplasmic. Residues Phe-109–Gly-133 traverse the membrane as a helical segment. Residues Ala-134 to Tyr-144 are Extracellular-facing. Residues Thr-145–Ser-169 traverse the membrane as a helical segment. Over Lys-170–Ser-175 the chain is Cytoplasmic. A helical membrane pass occupies residues Gly-176–Leu-194. Residues Asn-195–Pro-239 are Extracellular-facing. A helical membrane pass occupies residues Asp-240 to Arg-261. The Cytoplasmic segment spans residues Val-262–Ser-285. The helical transmembrane segment at Asn-286–Asp-307 threads the bilayer. Residues Arg-308 to Val-346 are Extracellular-facing. A helical membrane pass occupies residues Arg-347–Trp-366. Residues Val-367–Val-409 lie on the Cytoplasmic side of the membrane. A helical membrane pass occupies residues Thr-410 to Gly-428. Topologically, residues Ala-429–Gly-431 are extracellular. A helical membrane pass occupies residues Thr-432 to Phe-446. Over Tyr-447–Gly-468 the chain is Cytoplasmic.

This sequence belongs to the SecY/SEC61-alpha family. Component of the Sec protein translocase complex. Heterotrimer consisting of alpha (SecY), beta (SecG) and gamma (SecE) subunits. The heterotrimers can form oligomers, although 1 heterotrimer is thought to be able to translocate proteins. Interacts with the ribosome. May interact with SecDF, and other proteins may be involved.

It is found in the cell membrane. Functionally, the central subunit of the protein translocation channel SecYEG. Consists of two halves formed by TMs 1-5 and 6-10. These two domains form a lateral gate at the front which open onto the bilayer between TMs 2 and 7, and are clamped together by SecE at the back. The channel is closed by both a pore ring composed of hydrophobic SecY resides and a short helix (helix 2A) on the extracellular side of the membrane which forms a plug. The plug probably moves laterally to allow the channel to open. The ring and the pore may move independently. In Pyrococcus horikoshii (strain ATCC 700860 / DSM 12428 / JCM 9974 / NBRC 100139 / OT-3), this protein is Protein translocase subunit SecY.